We begin with the raw amino-acid sequence, 127 residues long: Serum amyloid A protein (127 aa).

The signal sequence occupies residues 1 to 18 (MKLLTSLFLLSLVLCVNS). Gln-19 is modified (pyrrolidone carboxylic acid). The disordered stretch occupies residues 89–127 (GGSSGRGVEDSMADQEANRWGRSGKDPNRYRPKGLDPKY). The span at 104–127 (EANRWGRSGKDPNRYRPKGLDPKY) shows a compositional bias: basic and acidic residues.

This sequence belongs to the SAA family. In terms of tissue distribution, expressed by the liver; secreted in plasma.

Its subcellular location is the secreted. Functionally, major acute phase reactant. Apolipoprotein of the HDL complex. In Notamacropus eugenii (Tammar wallaby), this protein is Serum amyloid A protein (SAA1).